The following is a 601-amino-acid chain: MTTQVPPSSLLPLSPEQLARLQAAVGEFSPTQMAWLSGYFWGMVNQQPGAVVAPAVAAPAAVTITLISASQTGNARRLAEQLRDDLVAAKLNVNLVNAGDYKFKQIAQERLLVIVASTQGEGEPAEEAVALYKFLFSKKAPKLPETAFAVLGLGDTSYEHFCQAGKDFDNKLAELGAQRLLERVDADVEYQESAQQWRQQIVAALQARVPAQSAAAVAVTPSGAVDEITSSPYSKAAPLTAQLSVQQKVTGRNSEKDVRHIEIDLGDSGLRYQPGDALGIWFDNDPALVEELLALLWLKGDEQVSIDGQNISLSQALRSHLELTQNTTLIVDKYAALSRDEKLIALLADKSALQHYAKNTPIVDMVRQAPSDLNADQLVALLRPLTPRLYSIASSQAETENEVHVTVGVVRYDIDGRPRTGGASGYLADRLEVDGDIRIFIEHNDNFRLPANPETPVIMIGPGTGIAPFRAFMQQREADGATGKNWLLFGNPHFTEDFLYQVEWQRYVKDGLLTRIDLAWSRDQADKIYVQDKLREQGAELWNWIQQGAHIYVCGDANRMAKDVEQVLLDVVALHGAMDAEQADEYLSELRLARRYQRDVY.

One can recognise a Flavodoxin-like domain in the interval 64 to 202; the sequence is ITLISASQTG…SAQQWRQQIV (139 aa). FMN-binding positions include 70–75, 117–120, and 153–162; these read SQTGNA, STQG, and LGDTSYEHFC. Residues 236 to 450 form the FAD-binding FR-type domain; sequence AAPLTAQLSV…IEHNDNFRLP (215 aa). FAD is bound by residues threonine 324, lysine 358, 388–391, 406–408, tyrosine 412, and 421–424; these read RLYS, TVG, and GGAS. NADP(+) is bound by residues 521–522, 527–531, and aspartate 563; these read SR and KIYVQ. FAD is bound at residue tyrosine 601.

Belongs to the NADPH-dependent sulphite reductase flavoprotein subunit CysJ family. The protein in the N-terminal section; belongs to the flavodoxin family. This sequence in the C-terminal section; belongs to the flavoprotein pyridine nucleotide cytochrome reductase family. Alpha(8)-beta(8). The alpha component is a flavoprotein, the beta component is a hemoprotein. It depends on FAD as a cofactor. Requires FMN as cofactor.

The enzyme catalyses hydrogen sulfide + 3 NADP(+) + 3 H2O = sulfite + 3 NADPH + 4 H(+). It functions in the pathway sulfur metabolism; hydrogen sulfide biosynthesis; hydrogen sulfide from sulfite (NADPH route): step 1/1. Component of the sulfite reductase complex that catalyzes the 6-electron reduction of sulfite to sulfide. This is one of several activities required for the biosynthesis of L-cysteine from sulfate. The flavoprotein component catalyzes the electron flow from NADPH -&gt; FAD -&gt; FMN to the hemoprotein component. In Yersinia enterocolitica serotype O:8 / biotype 1B (strain NCTC 13174 / 8081), this protein is Sulfite reductase [NADPH] flavoprotein alpha-component.